The chain runs to 55 residues: UPF0391 membrane protein Sfum_0248 (55 aa).

Transmembrane regions (helical) follow at residues 4–24 (WALIFLAVAIAAGVLGFGGII) and 28–48 (AWIAQVLFILFLVFFLVSLLS).

Belongs to the UPF0391 family.

The protein localises to the cell membrane. This chain is UPF0391 membrane protein Sfum_0248, found in Syntrophobacter fumaroxidans (strain DSM 10017 / MPOB).